A 252-amino-acid chain; its full sequence is 3-dehydroquinate dehydratase (252 aa).

3-dehydroquinate is bound by residues 46-48 and arginine 82; that span reads EWR. The Proton donor/acceptor role is filled by histidine 143. Lysine 170 functions as the Schiff-base intermediate with substrate in the catalytic mechanism. Positions 212, 231, and 235 each coordinate 3-dehydroquinate.

Belongs to the type-I 3-dehydroquinase family. Homodimer.

The catalysed reaction is 3-dehydroquinate = 3-dehydroshikimate + H2O. It participates in metabolic intermediate biosynthesis; chorismate biosynthesis; chorismate from D-erythrose 4-phosphate and phosphoenolpyruvate: step 3/7. Its function is as follows. Involved in the third step of the chorismate pathway, which leads to the biosynthesis of aromatic amino acids. Catalyzes the cis-dehydration of 3-dehydroquinate (DHQ) and introduces the first double bond of the aromatic ring to yield 3-dehydroshikimate. The protein is 3-dehydroquinate dehydratase of Listeria innocua serovar 6a (strain ATCC BAA-680 / CLIP 11262).